The primary structure comprises 423 residues: Histidine--tRNA ligase (423 aa).

Belongs to the class-II aminoacyl-tRNA synthetase family. As to quaternary structure, homodimer.

It is found in the cytoplasm. The enzyme catalyses tRNA(His) + L-histidine + ATP = L-histidyl-tRNA(His) + AMP + diphosphate + H(+). The protein is Histidine--tRNA ligase (hisS) of Haemophilus influenzae (strain ATCC 51907 / DSM 11121 / KW20 / Rd).